We begin with the raw amino-acid sequence, 329 residues long: MPEPGPRMNGFSLGELCWLFCCPPCPSRIAAKLAFLPPEPTYTVLAPEQRGPGAPAPASAASTSSASAAAQPAPQQPEEGGAGPGACSLHLSERADWQYSQRELDAVEVFFSRTARDNRLGCMFVRCAPSSRYTLLFSHGNAVDLGQMCSFYIGLGSRINCNIFSYDYSGYGVSSGKPSEKNLYADIDAAWQALRTRYGVSPENIILYGQSIGTVPTVDLASRYECAAVILHSPLMSGLRVAFPDTRKTYCFDAFPSIDKISKVTSPVLVIHGTEDEVIDFSHGLAMYERCPRAVEPLWVEGAGHNDIELYAQYLERLKQFISHELPNS.

Residues 46–85 (APEQRGPGAPAPASAASTSSASAAAQPAPQQPEEGGAGPG) are disordered. Residues 51–79 (GPGAPAPASAASTSSASAAAQPAPQQPEE) show a composition bias toward low complexity. Catalysis depends on charge relay system residues Ser211, Asp276, and His305.

It belongs to the AB hydrolase superfamily. ABHD17 family. Palmitoylated on cysteine residues located in a cysteine cluster at the N-terminus which promotes membrane localization. Palmitoylation is required for post-synaptic localization and for depalmitoylating activity towards DLG4/PSD95.

Its subcellular location is the recycling endosome membrane. The protein localises to the cell projection. It is found in the dendritic spine. It localises to the postsynaptic density membrane. The catalysed reaction is S-hexadecanoyl-L-cysteinyl-[protein] + H2O = L-cysteinyl-[protein] + hexadecanoate + H(+). Hydrolyzes fatty acids from S-acylated cysteine residues in proteins. Has depalmitoylating activity towards NRAS and DLG4/PSD95. This chain is Alpha/beta hydrolase domain-containing protein 17C, found in Bos taurus (Bovine).